The primary structure comprises 1426 residues: ABC transporter G family member 31 (1426 aa).

The region spanning 142–415 is the ABC transporter 1 domain; it reads LRHLRIYRGG…FAGMGFRCPE (274 aa). 175 to 182 serves as a coordination point for ATP; that stretch reads GPPSSGKT. An ABC transmembrane type-2 1 domain is found at 493 to 706; the sequence is ELLKSNFQWQ…AQNAISVNEF (214 aa). 7 helical membrane passes run 511-531, 544-564, 592-612, 630-650, 655-675, 681-701, and 741-761; these read FIYV…MTVF, GIIY…NGFT, LPSW…WVLV, FLLL…MASL, IVAN…GGFI, IPAW…QNAI, and IGVG…TLFL. One can recognise an ABC transporter 2 domain in the interval 824 to 1076; sequence MCFKNINYYV…NLVEFFEAIP (253 aa). 869–876 contributes to the ATP binding site; the sequence is GVSGAGKT. Residues 1149–1363 form the ABC transmembrane type-2 2 domain; it reads AQYAACLWKQ…TLYGLLTSQF (215 aa). Transmembrane regions (helical) follow at residues 1168–1188, 1200–1220, 1245–1265, 1283–1303, 1313–1333, 1341–1363, and 1398–1418; these read YTAV…TICW, IFNA…TNAT, LPFA…QSLI, FLWY…YGMM, VAPI…GFMI, WWRW…TSQF, and VVAG…ALAI.

This sequence belongs to the ABC transporter superfamily. ABCG family. PDR (TC 3.A.1.205) subfamily.

The protein resides in the membrane. In terms of biological role, may be a general defense protein. In Oryza sativa subsp. japonica (Rice), this protein is ABC transporter G family member 31.